The following is a 645-amino-acid chain: Alkyldihydroxyacetonephosphate synthase, peroxisomal (645 aa).

A compositionally biased stretch (low complexity) spans 1–10; that stretch reads MAEAAAGEAG. The N-terminal 45 residues, 1 to 45, are a transit peptide targeting the peroxisome; the sequence is MAEAAAGEAGASERDPDAGRARRRLRVLSGHLLGRPQEAPSTNEC. Residues 1–72 form a disordered region; that stretch reads MAEAAAGEAG…AAPESGTIPK (72 aa). The segment covering 11 to 20 has biased composition (basic and acidic residues); sequence ASERDPDAGR. Residues 50 to 69 show a composition bias toward low complexity; that stretch reads AASAAGASPAATPAAPESGT. 2 positions are modified to phosphoserine: serine 52 and serine 57. At threonine 61 the chain carries Phosphothreonine. The residue at position 89 (lysine 89) is an N6-acetyllysine. In terms of domain architecture, FAD-binding PCMH-type spans 189–371; sequence FERIPDIVVW…TEATIKIRPT (183 aa). FAD is bound by residues 221-227, 290-296, and 303-306; these read PIGGGTS, DSLEFST, and TRAS. The residue at position 334 (lysine 334) is an N6-acetyllysine. 355–361 contacts FAD; the sequence is EGTLGVI. Residue arginine 502 coordinates substrate. Tyrosine 565 functions as the Proton donor/acceptor in the catalytic mechanism. Important for enzyme activity stretches follow at residues 602 to 604 and 641 to 645; these read HHH and NRNLL.

The protein belongs to the FAD-binding oxidoreductase/transferase type 4 family. As to quaternary structure, homodimer. FAD serves as cofactor.

It localises to the peroxisome membrane. The protein resides in the peroxisome. It catalyses the reaction a long chain fatty alcohol + a 1-acylglycerone 3-phosphate = a 1-O-alkylglycerone 3-phosphate + a long-chain fatty acid + H(+). The catalysed reaction is hexadecan-1-ol + 1-hexadecanoylglycerone 3-phosphate = 1-O-hexadecylglycerone 3-phosphate + hexadecanoate + H(+). It carries out the reaction 1-hexadecanoylglycerone 3-phosphate + a long-chain fatty acid = a 1-acylglycerone 3-phosphate + hexadecanoate. Its pathway is glycerolipid metabolism; ether lipid biosynthesis. Functionally, catalyzes the exchange of the acyl chain in acyl-dihydroxyacetonephosphate (acyl-DHAP) for a long chain fatty alcohol, yielding the first ether linked intermediate, i.e. alkyl-dihydroxyacetonephosphate (alkyl-DHAP), in the pathway of ether lipid biosynthesis. This chain is Alkyldihydroxyacetonephosphate synthase, peroxisomal (Agps), found in Mus musculus (Mouse).